We begin with the raw amino-acid sequence, 503 residues long: ATP synthase subunit alpha (503 aa).

An ATP-binding site is contributed by 170-177 (GDRKTGKT).

Belongs to the ATPase alpha/beta chains family. As to quaternary structure, F-type ATPases have 2 components, CF(1) - the catalytic core - and CF(0) - the membrane proton channel. CF(1) has five subunits: alpha(3), beta(3), gamma(1), delta(1), epsilon(1). CF(0) has four main subunits: a, b, b' and c.

The protein localises to the cellular thylakoid membrane. It carries out the reaction ATP + H2O + 4 H(+)(in) = ADP + phosphate + 5 H(+)(out). In terms of biological role, produces ATP from ADP in the presence of a proton gradient across the membrane. The alpha chain is a regulatory subunit. The sequence is that of ATP synthase subunit alpha from Rippkaea orientalis (strain PCC 8801 / RF-1) (Cyanothece sp. (strain PCC 8801)).